A 272-amino-acid chain; its full sequence is tRNA pseudouridine synthase B (272 aa).

Catalysis depends on aspartate 38, which acts as the Nucleophile.

Belongs to the pseudouridine synthase TruB family. Type 1 subfamily.

The catalysed reaction is uridine(55) in tRNA = pseudouridine(55) in tRNA. In terms of biological role, responsible for synthesis of pseudouridine from uracil-55 in the psi GC loop of transfer RNAs. This is tRNA pseudouridine synthase B from Campylobacter jejuni subsp. jejuni serotype O:6 (strain 81116 / NCTC 11828).